A 658-amino-acid polypeptide reads, in one-letter code: Zinc finger protein 135 (658 aa).

One can recognise a KRAB domain in the interval 14–85; the sequence is VTFEDVVVGF…ESRLPQGVYP (72 aa). Residues 171–196 form a disordered region; that stretch reads LNPDLPHQPMTPERQSPHTWGTRGKR. C2H2-type zinc fingers lie at residues 214–236, 242–264, 270–292, 298–320, 326–348, 354–376, 382–404, 410–432, 438–460, 466–488, 494–516, 522–544, 550–572, 578–600, 606–628, and 634–656; these read YKCQ…HRTH, YECH…QRIH, YKCT…QRTH, YECS…ERTH, YECS…LRIH, YQCG…QRIH, YECH…QRTH, YECG…RRIH, YGCN…ERTH, YECS…QRIH, YECN…QRIH, YECH…RRIH, and YACR…QRTH.

This sequence belongs to the krueppel C2H2-type zinc-finger protein family.

The protein resides in the nucleus. Plays a role in the regulation of cell morphology and cytoskeletal organization. May be involved in transcriptional regulation. The chain is Zinc finger protein 135 (ZNF135) from Homo sapiens (Human).